Here is a 486-residue protein sequence, read N- to C-terminus: Bifunctional protein GlmU (486 aa).

A pyrophosphorylase region spans residues 1 to 241; it reads MSASDSSSAV…ARELAGVNDR (241 aa). UDP-N-acetyl-alpha-D-glucosamine contacts are provided by residues 13 to 16, Lys-27, Gln-84, and 89 to 90; these read LAAG and GT. Asp-114 is a binding site for Mg(2+). UDP-N-acetyl-alpha-D-glucosamine-binding residues include Gly-151, Glu-166, Asn-181, and Asn-239. Mg(2+) is bound at residue Asn-239. The interval 242 to 262 is linker; that stretch reads VQLAEAGAELNRRTVEAAMRG. The tract at residues 263 to 486 is N-acetyltransferase; it reads GATIVDPATT…AQNSVPNQEG (224 aa). UDP-N-acetyl-alpha-D-glucosamine is bound by residues Arg-344 and Lys-362. The active-site Proton acceptor is the His-374. Residues Tyr-377 and Asn-388 each contribute to the UDP-N-acetyl-alpha-D-glucosamine site. Residues Ala-391, 397–398, Ser-416, and Ala-434 contribute to the acetyl-CoA site; that span reads NY. A disordered region spans residues 464–486; it reads KRPGTAAADAAAAAQNSVPNQEG.

The protein in the N-terminal section; belongs to the N-acetylglucosamine-1-phosphate uridyltransferase family. It in the C-terminal section; belongs to the transferase hexapeptide repeat family. As to quaternary structure, homotrimer. It depends on Mg(2+) as a cofactor.

Its subcellular location is the cytoplasm. It catalyses the reaction alpha-D-glucosamine 1-phosphate + acetyl-CoA = N-acetyl-alpha-D-glucosamine 1-phosphate + CoA + H(+). The catalysed reaction is N-acetyl-alpha-D-glucosamine 1-phosphate + UTP + H(+) = UDP-N-acetyl-alpha-D-glucosamine + diphosphate. The protein operates within nucleotide-sugar biosynthesis; UDP-N-acetyl-alpha-D-glucosamine biosynthesis; N-acetyl-alpha-D-glucosamine 1-phosphate from alpha-D-glucosamine 6-phosphate (route II): step 2/2. It functions in the pathway nucleotide-sugar biosynthesis; UDP-N-acetyl-alpha-D-glucosamine biosynthesis; UDP-N-acetyl-alpha-D-glucosamine from N-acetyl-alpha-D-glucosamine 1-phosphate: step 1/1. It participates in bacterial outer membrane biogenesis; LPS lipid A biosynthesis. Its function is as follows. Catalyzes the last two sequential reactions in the de novo biosynthetic pathway for UDP-N-acetylglucosamine (UDP-GlcNAc). The C-terminal domain catalyzes the transfer of acetyl group from acetyl coenzyme A to glucosamine-1-phosphate (GlcN-1-P) to produce N-acetylglucosamine-1-phosphate (GlcNAc-1-P), which is converted into UDP-GlcNAc by the transfer of uridine 5-monophosphate (from uridine 5-triphosphate), a reaction catalyzed by the N-terminal domain. This is Bifunctional protein GlmU from Corynebacterium efficiens (strain DSM 44549 / YS-314 / AJ 12310 / JCM 11189 / NBRC 100395).